A 235-amino-acid chain; its full sequence is Ribonuclease 3 (235 aa).

Residues 6–131 (IDQLERLTEH…LIAVMYLDGG (126 aa)) form the RNase III domain. Glu44 contributes to the Mg(2+) binding site. Asp48 is a catalytic residue. Mg(2+) contacts are provided by Asp117 and Glu120. Glu120 is an active-site residue. The DRBM domain maps to 156–225 (DAKTELQEWA…AEKVLRREGI (70 aa)).

This sequence belongs to the ribonuclease III family. Homodimer. Mg(2+) is required as a cofactor.

Its subcellular location is the cytoplasm. The enzyme catalyses Endonucleolytic cleavage to 5'-phosphomonoester.. In terms of biological role, digests double-stranded RNA. Involved in the processing of primary rRNA transcript to yield the immediate precursors to the large and small rRNAs (23S and 16S). Processes some mRNAs, and tRNAs when they are encoded in the rRNA operon. Processes pre-crRNA and tracrRNA of type II CRISPR loci if present in the organism. This is Ribonuclease 3 from Bartonella quintana (strain Toulouse) (Rochalimaea quintana).